The following is a 355-amino-acid chain: S-adenosylmethionine:tRNA ribosyltransferase-isomerase (355 aa).

The protein belongs to the QueA family. As to quaternary structure, monomer.

It is found in the cytoplasm. It catalyses the reaction 7-aminomethyl-7-carbaguanosine(34) in tRNA + S-adenosyl-L-methionine = epoxyqueuosine(34) in tRNA + adenine + L-methionine + 2 H(+). Its pathway is tRNA modification; tRNA-queuosine biosynthesis. Functionally, transfers and isomerizes the ribose moiety from AdoMet to the 7-aminomethyl group of 7-deazaguanine (preQ1-tRNA) to give epoxyqueuosine (oQ-tRNA). This Burkholderia ambifaria (strain MC40-6) protein is S-adenosylmethionine:tRNA ribosyltransferase-isomerase.